The following is a 126-amino-acid chain: Holo-[acyl-carrier-protein] synthase (126 aa).

Mg(2+) is bound by residues D9 and E58.

The protein belongs to the P-Pant transferase superfamily. AcpS family. Mg(2+) serves as cofactor.

It localises to the cytoplasm. The enzyme catalyses apo-[ACP] + CoA = holo-[ACP] + adenosine 3',5'-bisphosphate + H(+). Transfers the 4'-phosphopantetheine moiety from coenzyme A to a Ser of acyl-carrier-protein. The sequence is that of Holo-[acyl-carrier-protein] synthase from Pectobacterium atrosepticum (strain SCRI 1043 / ATCC BAA-672) (Erwinia carotovora subsp. atroseptica).